Reading from the N-terminus, the 302-residue chain is ATP synthase gamma chain (302 aa).

The protein belongs to the ATPase gamma chain family. In terms of assembly, F-type ATPases have 2 components, CF(1) - the catalytic core - and CF(0) - the membrane proton channel. CF(1) has five subunits: alpha(3), beta(3), gamma(1), delta(1), epsilon(1). CF(0) has three main subunits: a, b and c.

The protein resides in the cell membrane. Produces ATP from ADP in the presence of a proton gradient across the membrane. The gamma chain is believed to be important in regulating ATPase activity and the flow of protons through the CF(0) complex. This Kineococcus radiotolerans (strain ATCC BAA-149 / DSM 14245 / SRS30216) protein is ATP synthase gamma chain.